Here is a 208-residue protein sequence, read N- to C-terminus: Uracil phosphoribosyltransferase (208 aa).

Residues Arg78, Arg103, and 130-138 (DPMLATGGS) each bind 5-phospho-alpha-D-ribose 1-diphosphate. Uracil is bound by residues Ile193 and 198–200 (GDA). Asp199 is a binding site for 5-phospho-alpha-D-ribose 1-diphosphate.

This sequence belongs to the UPRTase family. It depends on Mg(2+) as a cofactor.

The catalysed reaction is UMP + diphosphate = 5-phospho-alpha-D-ribose 1-diphosphate + uracil. The protein operates within pyrimidine metabolism; UMP biosynthesis via salvage pathway; UMP from uracil: step 1/1. Allosterically activated by GTP. In terms of biological role, catalyzes the conversion of uracil and 5-phospho-alpha-D-ribose 1-diphosphate (PRPP) to UMP and diphosphate. The sequence is that of Uracil phosphoribosyltransferase from Aeromonas salmonicida (strain A449).